The primary structure comprises 293 residues: Glutamyl-Q tRNA(Asp) synthetase (293 aa).

L-glutamate-binding positions include 8 to 12 (RFAPS) and Glu-44. The 'HIGH' region signature appears at 11 to 21 (PSPSGPLHAGS). Residues Cys-98, Cys-100, Tyr-120, and Cys-124 each coordinate Zn(2+). L-glutamate-binding residues include Tyr-183 and Arg-201. Residues 239-243 (KLSKQ) carry the 'KMSKS' region motif. Lys-242 contributes to the ATP binding site.

Belongs to the class-I aminoacyl-tRNA synthetase family. GluQ subfamily. Zn(2+) is required as a cofactor.

Catalyzes the tRNA-independent activation of glutamate in presence of ATP and the subsequent transfer of glutamate onto a tRNA(Asp). Glutamate is transferred on the 2-amino-5-(4,5-dihydroxy-2-cyclopenten-1-yl) moiety of the queuosine in the wobble position of the QUC anticodon. The polypeptide is Glutamyl-Q tRNA(Asp) synthetase (Janthinobacterium sp. (strain Marseille) (Minibacterium massiliensis)).